A 367-amino-acid chain; its full sequence is Deoxyhypusine synthase-like protein (367 aa).

The disordered stretch occupies residues 1–23 (MKSLFQRRASKVRETEAMNAPVP).

The protein belongs to the deoxyhypusine synthase family.

The chain is Deoxyhypusine synthase-like protein from Caulobacter vibrioides (strain ATCC 19089 / CIP 103742 / CB 15) (Caulobacter crescentus).